Reading from the N-terminus, the 334-residue chain is Nucleoid-associated protein PFL_1060 (334 aa).

This sequence belongs to the YejK family.

It localises to the cytoplasm. The protein localises to the nucleoid. The protein is Nucleoid-associated protein PFL_1060 of Pseudomonas fluorescens (strain ATCC BAA-477 / NRRL B-23932 / Pf-5).